A 658-amino-acid chain; its full sequence is Zinc finger protein 135 (658 aa).

The KRAB domain occupies 14–85 (VTFEDVVVGF…ESRLPQGVYP (72 aa)). Positions 171–196 (LNPDLPHQPMTPERQSPHTWGTRGKR) are disordered. 16 C2H2-type zinc fingers span residues 214–236 (YKCQECGKAFSHSSALIEHHRTH), 242–264 (YECHECLKGFRNSSALTKHQRIH), 270–292 (YKCTQCGRTFNQIAPLIQHQRTH), 298–320 (YECSECGKSFSFRSSFSQHERTH), 326–348 (YECSECGKAFRQSIHLTQHLRIH), 354–376 (YQCGECGKAFSHSSSLTKHQRIH), 382–404 (YECHECGKAFTQITPLIQHQRTH), 410–432 (YECGECGKAFSQSTLLTEHRRIH), 438–460 (YGCNECGKTFSHSSSLSQHERTH), 466–488 (YECSQCGKAFRQSTHLTQHQRIH), 494–516 (YECNDCGKAFSHSSSLTKHQRIH), 522–544 (YECNQCGRAFSQLAPLIQHQRIH), 550–572 (YECNQCGRAFSQSSLLIEHQRIH), 578–600 (YGCNECGKSFSHSSSLSQHERTH), 606–628 (YECHDCGKSFRQSTHLTQHRRIH), and 634–656 (YACRDCGKAFTHSSSLTKHQRTH).

This sequence belongs to the krueppel C2H2-type zinc-finger protein family.

It is found in the nucleus. In terms of biological role, plays a role in the regulation of cell morphology and cytoskeletal organization. May be involved in transcriptional regulation. The protein is Zinc finger protein 135 (ZNF135) of Homo sapiens (Human).